A 111-amino-acid chain; its full sequence is Large ribosomal subunit protein uL22 (111 aa).

Belongs to the universal ribosomal protein uL22 family. Part of the 50S ribosomal subunit.

Its function is as follows. This protein binds specifically to 23S rRNA; its binding is stimulated by other ribosomal proteins, e.g. L4, L17, and L20. It is important during the early stages of 50S assembly. It makes multiple contacts with different domains of the 23S rRNA in the assembled 50S subunit and ribosome. In terms of biological role, the globular domain of the protein is located near the polypeptide exit tunnel on the outside of the subunit, while an extended beta-hairpin is found that lines the wall of the exit tunnel in the center of the 70S ribosome. The chain is Large ribosomal subunit protein uL22 from Clostridium tetani (strain Massachusetts / E88).